Reading from the N-terminus, the 166-residue chain is Small ribosomal subunit protein uS5 (166 aa).

Positions L11 to V74 constitute an S5 DRBM domain.

The protein belongs to the universal ribosomal protein uS5 family. As to quaternary structure, part of the 30S ribosomal subunit. Contacts proteins S4 and S8.

Functionally, with S4 and S12 plays an important role in translational accuracy. Located at the back of the 30S subunit body where it stabilizes the conformation of the head with respect to the body. The protein is Small ribosomal subunit protein uS5 of Photorhabdus laumondii subsp. laumondii (strain DSM 15139 / CIP 105565 / TT01) (Photorhabdus luminescens subsp. laumondii).